A 411-amino-acid chain; its full sequence is MALYSISKPVGSKINKHSYQDENTLVGKQALSKGTEKTKLSTNFEINLPRRTVLSDVSNVGKNNADEKDTKKAKRSFDESNLSTNEEADKPVESKFVKKLKVYSKNADPSVETLQKDRVSNVDDHLSSNPLMAEEYAPEIFEYIRKLDLKCLPNPKYMDQQKELTWKMREILNEWLVEIHSNFCLMPETLYLAVNIIDRFLSRRSCSLSKFQLTGITALLIASKYEEVMCPSIQNFVYMTDGAFTVEDVCVAERYMLNVLNFDLSYPSPLNFLRKISQAEGYDAQTRTLGKYLTEIYLFDHDLLRYPMSKIAAAAMYLSRRLLRRGPWTPKLVESSGGYEEHELKEIAYIMLHYHNKPLEHKAFFQKYSSKRFLKASIFVHQLVRQRYSVNRTDDDDLQSEPSSSLTNDGH.

Residues 51–60 (RTVLSDVSNV) carry the Destruction box motif. The segment at 57–89 (VSNVGKNNADEKDTKKAKRSFDESNLSTNEEAD) is disordered. Residues 64–78 (NADEKDTKKAKRSFD) are compositionally biased toward basic and acidic residues. Positions 139–265 (EIFEYIRKLD…MLNVLNFDLS (127 aa)) constitute a Cyclin N-terminal domain. An interaction with pop1 region spans residues 181–273 (SNFCLMPETL…LSYPSPLNFL (93 aa)).

It belongs to the cyclin family. Cyclin AB subfamily. As to quaternary structure, associates with cdc2, res2 and rum1. Interacts with pop1 only when phosphorylated. Phosphorylated.

Its subcellular location is the nucleus. It localises to the cytoplasm. It is found in the cytoskeleton. The protein localises to the microtubule organizing center. The protein resides in the spindle pole body. In terms of biological role, essential for the control of the cell cycle at the G2/M and G1/S (mitosis) transition. Interacts with the cdc2 protein kinase to form MPF. Interaction with res2 promotes the phosphorylation of res1 and inhibits MBF-dependent gene transcription. Forms an autoregulating feedback-inhibition loop with MBF which is important for normal regulation of the cell cycle. G2/M cyclins accumulate steadily during G2 and are abruptly destroyed at mitosis. Negatively regulates conjugation via interacting with cell cycle 'start' genes. Degraded by skp1, pop1 and pop2 in the G2 and M phases of the cell cycle. This Schizosaccharomyces pombe (strain 972 / ATCC 24843) (Fission yeast) protein is G2/mitotic-specific cyclin cig2 (cig2).